Reading from the N-terminus, the 591-residue chain is Aspartate--tRNA ligase (591 aa).

Glu175 contributes to the L-aspartate binding site. Positions 199–202 (QLFK) are aspartate. Arg221 is an L-aspartate binding site. Residues 221–223 (RDE) and Gln230 each bind ATP. His449 is a binding site for L-aspartate. Glu483 serves as a coordination point for ATP. Arg490 lines the L-aspartate pocket. Residue 535 to 538 (GLDR) coordinates ATP.

It belongs to the class-II aminoacyl-tRNA synthetase family. Type 1 subfamily. Homodimer.

It localises to the cytoplasm. It catalyses the reaction tRNA(Asp) + L-aspartate + ATP = L-aspartyl-tRNA(Asp) + AMP + diphosphate. In terms of biological role, catalyzes the attachment of L-aspartate to tRNA(Asp) in a two-step reaction: L-aspartate is first activated by ATP to form Asp-AMP and then transferred to the acceptor end of tRNA(Asp). The protein is Aspartate--tRNA ligase of Oceanobacillus iheyensis (strain DSM 14371 / CIP 107618 / JCM 11309 / KCTC 3954 / HTE831).